The sequence spans 216 residues: Adenylate kinase (216 aa).

10–15 (GAGKGT) contacts ATP. Residues 30 to 59 (STGDMLRAAVKAETPVGLKAKAVMEAGQLV) form an NMP region. Residues threonine 31, arginine 36, 57–59 (QLV), 85–88 (GYPR), and glutamine 92 contribute to the AMP site. Residues 126 to 164 (GRYTCATCGKGYHDKFEKPAVEGTCDKCGGHEFKRRPDD) are LID. Arginine 127 contributes to the ATP binding site. Cysteine 130, cysteine 133, cysteine 150, and cysteine 153 together coordinate Zn(2+). AMP is bound by residues arginine 161 and arginine 172. Alanine 200 contributes to the ATP binding site.

This sequence belongs to the adenylate kinase family. In terms of assembly, monomer.

The protein localises to the cytoplasm. The catalysed reaction is AMP + ATP = 2 ADP. Its pathway is purine metabolism; AMP biosynthesis via salvage pathway; AMP from ADP: step 1/1. Its function is as follows. Catalyzes the reversible transfer of the terminal phosphate group between ATP and AMP. Plays an important role in cellular energy homeostasis and in adenine nucleotide metabolism. This Novosphingobium aromaticivorans (strain ATCC 700278 / DSM 12444 / CCUG 56034 / CIP 105152 / NBRC 16084 / F199) protein is Adenylate kinase.